A 203-amino-acid polypeptide reads, in one-letter code: Urease accessory protein UreG (203 aa).

14-21 (GPVGSGKT) provides a ligand contact to GTP.

This sequence belongs to the SIMIBI class G3E GTPase family. UreG subfamily. Homodimer. UreD, UreF and UreG form a complex that acts as a GTP-hydrolysis-dependent molecular chaperone, activating the urease apoprotein by helping to assemble the nickel containing metallocenter of UreC. The UreE protein probably delivers the nickel.

The protein resides in the cytoplasm. Facilitates the functional incorporation of the urease nickel metallocenter. This process requires GTP hydrolysis, probably effectuated by UreG. The chain is Urease accessory protein UreG from Agrobacterium fabrum (strain C58 / ATCC 33970) (Agrobacterium tumefaciens (strain C58)).